Consider the following 539-residue polypeptide: Glycerol kinase (539 aa).

Threonine 49 serves as a coordination point for ADP. Positions 49, 50, and 51 each coordinate ATP. Threonine 49 is a sn-glycerol 3-phosphate binding site. Arginine 53 contributes to the ADP binding site. Residues arginine 119, glutamate 120, tyrosine 171, and aspartate 280 each coordinate sn-glycerol 3-phosphate. Glycerol-binding residues include arginine 119, glutamate 120, tyrosine 171, aspartate 280, and glutamine 281. ADP-binding residues include threonine 302 and glycine 345. ATP is bound by residues threonine 302, glycine 345, glutamine 349, and glycine 446. ADP-binding residues include glycine 446 and asparagine 450.

Belongs to the FGGY kinase family.

The catalysed reaction is glycerol + ATP = sn-glycerol 3-phosphate + ADP + H(+). Its pathway is polyol metabolism; glycerol degradation via glycerol kinase pathway; sn-glycerol 3-phosphate from glycerol: step 1/1. Its activity is regulated as follows. Inhibited by fructose 1,6-bisphosphate (FBP). In terms of biological role, key enzyme in the regulation of glycerol uptake and metabolism. Catalyzes the phosphorylation of glycerol to yield sn-glycerol 3-phosphate. The polypeptide is Glycerol kinase (Rhodopirellula baltica (strain DSM 10527 / NCIMB 13988 / SH1)).